Consider the following 483-residue polypeptide: Betaine aldehyde dehydrogenase (483 aa).

Residues isoleucine 27 and aspartate 93 each contribute to the K(+) site. 149-151 (GAW) is an NAD(+) binding site. Residue lysine 161 is the Charge relay system of the active site. 175-178 (KPSE) serves as a coordination point for NAD(+). Valine 179 is a K(+) binding site. 228-231 (SVPT) lines the NAD(+) pocket. A K(+)-binding site is contributed by valine 243. The Proton acceptor role is filled by glutamate 249. 3 residues coordinate NAD(+): glycine 251, cysteine 283, and glutamate 380. Cysteine 283 acts as the Nucleophile in catalysis. The residue at position 283 (cysteine 283) is a Cysteine sulfenic acid (-SOH). The K(+) site is built by lysine 450 and glycine 453. The Charge relay system role is filled by glutamate 457.

Belongs to the aldehyde dehydrogenase family. Dimer of dimers. K(+) serves as cofactor.

The enzyme catalyses betaine aldehyde + NAD(+) + H2O = glycine betaine + NADH + 2 H(+). Its pathway is amine and polyamine biosynthesis; betaine biosynthesis via choline pathway; betaine from betaine aldehyde: step 1/1. Involved in the biosynthesis of the osmoprotectant glycine betaine. Catalyzes the irreversible oxidation of betaine aldehyde to the corresponding acid. In Cereibacter sphaeroides (strain ATCC 17023 / DSM 158 / JCM 6121 / CCUG 31486 / LMG 2827 / NBRC 12203 / NCIMB 8253 / ATH 2.4.1.) (Rhodobacter sphaeroides), this protein is Betaine aldehyde dehydrogenase.